A 174-amino-acid polypeptide reads, in one-letter code: Protein COFACTOR ASSEMBLY OF COMPLEX C SUBUNIT B CCB3, chloroplastic (174 aa).

The transit peptide at 1–39 (MTTVTTSFVSFSPALMIFQKKSRRSSPNFRNRSTSLPIV) directs the protein to the chloroplast. Over 40-78 (SATLSHIEEAATTTNLIRQTNSISESLRNISLADLDPGT) the chain is Lumenal. Residues 79-99 (AKLAIGILGPALSAFGFLFIL) traverse the membrane as a helical segment. Residues 100-147 (RIVMSWYPKLPVDKFPYVLAYAPTEPILVQTRKVIPPLAGVDVTPVVW) lie on the Stromal side of the membrane. Residues 148–168 (FGLVSFLSEILVGPQGLLVLV) traverse the membrane as a helical segment. The Lumenal portion of the chain corresponds to 169–174 (SQQQVN).

Belongs to the YggT family.

The protein resides in the plastid. The protein localises to the chloroplast thylakoid membrane. Required for the biogenesis and accumulation of native cytochrome b6 in the thylakoid membrane. Controls the conversion of apocytochrome b6 to holocytochrome b6. Required for covalent binding of the c-type heme to cytochrome b6. This Arabidopsis thaliana (Mouse-ear cress) protein is Protein COFACTOR ASSEMBLY OF COMPLEX C SUBUNIT B CCB3, chloroplastic.